The following is a 216-amino-acid chain: Imidazoleglycerol-phosphate dehydratase (216 aa).

Ser-211 carries the phosphoserine modification.

Belongs to the imidazoleglycerol-phosphate dehydratase family.

The catalysed reaction is D-erythro-1-(imidazol-4-yl)glycerol 3-phosphate = 3-(imidazol-4-yl)-2-oxopropyl phosphate + H2O. Its pathway is amino-acid biosynthesis; L-histidine biosynthesis; L-histidine from 5-phospho-alpha-D-ribose 1-diphosphate: step 6/9. In Schizosaccharomyces pombe (strain 972 / ATCC 24843) (Fission yeast), this protein is Imidazoleglycerol-phosphate dehydratase (his5).